A 255-amino-acid polypeptide reads, in one-letter code: 4-hydroxy-tetrahydrodipicolinate reductase (255 aa).

NAD(+) contacts are provided by residues 8 to 13 (GSTGRM), 88 to 90 (ATT), and 112 to 115 (SSNM). The active-site Proton donor/acceptor is His144. His145 provides a ligand contact to (S)-2,3,4,5-tetrahydrodipicolinate. Lys148 (proton donor) is an active-site residue. 154-155 (GT) lines the (S)-2,3,4,5-tetrahydrodipicolinate pocket.

The protein belongs to the DapB family.

It localises to the cytoplasm. It catalyses the reaction (S)-2,3,4,5-tetrahydrodipicolinate + NAD(+) + H2O = (2S,4S)-4-hydroxy-2,3,4,5-tetrahydrodipicolinate + NADH + H(+). The catalysed reaction is (S)-2,3,4,5-tetrahydrodipicolinate + NADP(+) + H2O = (2S,4S)-4-hydroxy-2,3,4,5-tetrahydrodipicolinate + NADPH + H(+). Its pathway is amino-acid biosynthesis; L-lysine biosynthesis via DAP pathway; (S)-tetrahydrodipicolinate from L-aspartate: step 4/4. Functionally, catalyzes the conversion of 4-hydroxy-tetrahydrodipicolinate (HTPA) to tetrahydrodipicolinate. In Sulfurovum sp. (strain NBC37-1), this protein is 4-hydroxy-tetrahydrodipicolinate reductase.